The primary structure comprises 198 residues: Small ribosomal subunit protein uS4 (198 aa).

An S4 RNA-binding domain is found at 91 to 154 (SRLDNVVYRL…KNLNIVQEAL (64 aa)).

Belongs to the universal ribosomal protein uS4 family. In terms of assembly, part of the 30S ribosomal subunit. Contacts protein S5. The interaction surface between S4 and S5 is involved in control of translational fidelity.

One of the primary rRNA binding proteins, it binds directly to 16S rRNA where it nucleates assembly of the body of the 30S subunit. In terms of biological role, with S5 and S12 plays an important role in translational accuracy. The polypeptide is Small ribosomal subunit protein uS4 (Aster yellows witches'-broom phytoplasma (strain AYWB)).